Consider the following 109-residue polypeptide: Large ribosomal subunit protein uL24 (109 aa).

This sequence belongs to the universal ribosomal protein uL24 family. In terms of assembly, part of the 50S ribosomal subunit.

In terms of biological role, one of two assembly initiator proteins, it binds directly to the 5'-end of the 23S rRNA, where it nucleates assembly of the 50S subunit. One of the proteins that surrounds the polypeptide exit tunnel on the outside of the subunit. The sequence is that of Large ribosomal subunit protein uL24 from Rickettsia akari (strain Hartford).